Consider the following 524-residue polypeptide: Casein kinase I homolog 3 (524 aa).

In terms of domain architecture, Protein kinase spans 14-319 (YAVGPKIGEG…YLISLMDDAL (306 aa)). ATP is bound by residues 20–28 (IGEGSFGVI) and K60. D150 functions as the Proton acceptor in the catalytic mechanism. Disordered stretches follow at residues 352–414 (HGYG…KQQH) and 427–474 (PETH…EHNL). The segment covering 360-373 (RVNGNTARNNVNTN) has biased composition (low complexity). 2 stretches are compositionally biased toward polar residues: residues 374–413 (SKTR…TKQQ) and 429–474 (THSN…EHNL). Positions 444–447 (YDSI) match the YXXZ targeting signal motif. Residues C517, C518, C519, C520, C522, C523, and C524 are each lipidated (S-palmitoyl cysteine).

It belongs to the protein kinase superfamily. CK1 Ser/Thr protein kinase family. Casein kinase I subfamily.

It is found in the cell membrane. The protein resides in the nucleus membrane. Its subcellular location is the vacuole membrane. The catalysed reaction is L-seryl-[protein] + ATP = O-phospho-L-seryl-[protein] + ADP + H(+). It catalyses the reaction L-threonyl-[protein] + ATP = O-phospho-L-threonyl-[protein] + ADP + H(+). Casein kinases are operationally defined by their preferential utilization of acidic proteins such as caseins as substrates. Phosphorylates MON1, inhibiting the guanine nucleotide exchange factor activity of the MON1-CCZ1 complex, possibly by preventing its recruitment to membranes by small GTPase RAB5 homologs. This Saccharomyces cerevisiae (strain ATCC 204508 / S288c) (Baker's yeast) protein is Casein kinase I homolog 3 (YCK3).